The chain runs to 70 residues: Large ribosomal subunit protein bL31 (70 aa).

Cysteine 16, cysteine 18, cysteine 37, and cysteine 40 together coordinate Zn(2+).

It belongs to the bacterial ribosomal protein bL31 family. Type A subfamily. In terms of assembly, part of the 50S ribosomal subunit. Requires Zn(2+) as cofactor.

Binds the 23S rRNA. The polypeptide is Large ribosomal subunit protein bL31 (Ectopseudomonas mendocina (strain ymp) (Pseudomonas mendocina)).